A 349-amino-acid chain; its full sequence is Divinyl chlorophyll a/b light-harvesting protein PcbB (349 aa).

The next 6 membrane-spanning stretches (helical) occupy residues 27–47, 57–77, 91–113, 201–221, 241–261, and 306–326; these read FIAA…AATL, LPMG…GIGF, IAIL…SVYF, VMGG…FHIA, AILS…AFWA, and LVNV…WHAL.

It belongs to the PsbB/PsbC family. IsiA/Pcb subfamily. As to quaternary structure, the antenna complex consists of divinyl chlorophylls (a and b) and divinyl chlorophyll a/b binding proteins and binds more divinyl chlorophyll b than does the antenna complex from high-light-adapted Prochlorococcus. It depends on divinyl chlorophyll a as a cofactor. Divinyl chlorophyll b serves as cofactor.

It is found in the cellular thylakoid membrane. In terms of biological role, the antenna complex functions as a light receptor, it captures and delivers excitation energy to photosystems II and I. The Prochlorales pcb genes are not related to higher plant LHCs. The protein is Divinyl chlorophyll a/b light-harvesting protein PcbB (pcbB) of Prochlorococcus marinus (strain SARG / CCMP1375 / SS120).